The primary structure comprises 465 residues: UDP-N-acetylmuramate--L-alanine ligase (465 aa).

112-118 (GTHGKTT) lines the ATP pocket.

It belongs to the MurCDEF family.

It localises to the cytoplasm. It catalyses the reaction UDP-N-acetyl-alpha-D-muramate + L-alanine + ATP = UDP-N-acetyl-alpha-D-muramoyl-L-alanine + ADP + phosphate + H(+). The protein operates within cell wall biogenesis; peptidoglycan biosynthesis. In terms of biological role, cell wall formation. The protein is UDP-N-acetylmuramate--L-alanine ligase of Burkholderia thailandensis (strain ATCC 700388 / DSM 13276 / CCUG 48851 / CIP 106301 / E264).